Consider the following 545-residue polypeptide: MAFNDLLKQVGGVGRFQLIQVTMVVAPLLLMASHNTLQNFTAAIPAHHCRPPANANLSKDGGLEAWLPLDKQGRPESCLRFPFPHNGTEANGTGVTEPCLDGWVYDNSTFPSTIVTEWNLVCSHRAFRQLAQSLFMVGVLLGAMMFGYLADRLGRRKVLILNYLQTAVSGTCAAYAPNYTVYCIFRLLSGMSLASIAINCMTLNMEWMPIHTRAYVGTLIGYVYSLGQFLLAGIAYAVPHWRHLQLAVSVPFFVAFIYSWFFIESARWYSSSGRLDLTLRALQRVARINGKQEEGAKLSIEVLQTSLQKELTLNKGQASAMELLRCPTLRRLFLCLSMLWFATSFAYYGLVMDLQGFGVSMYLIQVIFGAVDLPAKFVCFLVINSMGRRPAQLASLLLAGICILVNGIIPRGHTIIRTSLAVLGKGCLASSFNCIFLYTGELYPTMIRQTGLGMGSTMARVGSIVSPLISMTAEFYPSIPLFIFGAVPVAASAVTALLPETLGQPLPDTVQDLKSRSRGKQKQQQLEQQKQMIPLQVSTQEKNGL.

Over 1 to 9 (MAFNDLLKQ) the chain is Cytoplasmic. Residues 10–30 (VGGVGRFQLIQVTMVVAPLLL) form a helical membrane-spanning segment. The Extracellular segment spans residues 31–129 (MASHNTLQNF…LVCSHRAFRQ (99 aa)). N-linked (GlcNAc...) asparagine glycosylation is found at N39, N56, N86, N91, and N107. Residues 130 to 150 (LAQSLFMVGVLLGAMMFGYLA) traverse the membrane as a helical segment. The Cytoplasmic segment spans residues 151–157 (DRLGRRK). A helical membrane pass occupies residues 158-177 (VLILNYLQTAVSGTCAAYAP). N178 carries an N-linked (GlcNAc...) asparagine glycan. The Extracellular segment spans residues 178-180 (NYT). A helical transmembrane segment spans residues 181–201 (VYCIFRLLSGMSLASIAINCM). Residues 202 to 218 (TLNMEWMPIHTRAYVGT) are Cytoplasmic-facing. A helical membrane pass occupies residues 219 to 239 (LIGYVYSLGQFLLAGIAYAVP). The Extracellular portion of the chain corresponds to 240 to 242 (HWR). Residues 243 to 263 (HLQLAVSVPFFVAFIYSWFFI) form a helical membrane-spanning segment. Over 264 to 331 (ESARWYSSSG…ELLRCPTLRR (68 aa)) the chain is Cytoplasmic. The helical transmembrane segment at 332–352 (LFLCLSMLWFATSFAYYGLVM) threads the bilayer. Residues 353-362 (DLQGFGVSMY) lie on the Extracellular side of the membrane. Residues 363–383 (LIQVIFGAVDLPAKFVCFLVI) form a helical membrane-spanning segment. The Cytoplasmic segment spans residues 384–389 (NSMGRR). The chain crosses the membrane as a helical span at residues 390-410 (PAQLASLLLAGICILVNGIIP). Residues 411–419 (RGHTIIRTS) are Extracellular-facing. The chain crosses the membrane as a helical span at residues 420-440 (LAVLGKGCLASSFNCIFLYTG). Residues 441 to 450 (ELYPTMIRQT) lie on the Cytoplasmic side of the membrane. The helical transmembrane segment at 451-471 (GLGMGSTMARVGSIVSPLISM) threads the bilayer. Topologically, residues 472–478 (TAEFYPS) are extracellular. The chain crosses the membrane as a helical span at residues 479–499 (IPLFIFGAVPVAASAVTALLP). Over 500–545 (ETLGQPLPDTVQDLKSRSRGKQKQQQLEQQKQMIPLQVSTQEKNGL) the chain is Cytoplasmic. The interval 515 to 545 (SRSRGKQKQQQLEQQKQMIPLQVSTQEKNGL) is disordered. Residues 522-531 (KQQQLEQQKQ) are compositionally biased toward low complexity. A compositionally biased stretch (polar residues) spans 536 to 545 (QVSTQEKNGL).

It belongs to the major facilitator (TC 2.A.1) superfamily. Organic cation transporter (TC 2.A.1.19) family. In terms of processing, glycosylated. Glycosylation is necessary for proper targeting of the transporter to the plasma membrane. Expressed in kidney. In kidney, restricted to the proximal convoluted tubule (representing S1 and S2 segments). In brain, expressed in neurons of the cortex cerebri and hippocampus as well as in the ependymal cell layer of the choroid plexus.

The protein localises to the basolateral cell membrane. It localises to the basal cell membrane. It carries out the reaction (6R)-L-erythro-5,6,7,8-tetrahydrobiopterin(out) + a dicarboxylate(in) = (6R)-L-erythro-5,6,7,8-tetrahydrobiopterin(in) + a dicarboxylate(out). The enzyme catalyses L-erythro-7,8-dihydrobiopterin(out) + a dicarboxylate(in) = L-erythro-7,8-dihydrobiopterin(in) + a dicarboxylate(out). It catalyses the reaction L-sepiapterin(out) + a dicarboxylate(in) = L-sepiapterin(in) + a dicarboxylate(out). The catalysed reaction is prostaglandin F2alpha(out) + a dicarboxylate(in) = prostaglandin F2alpha(in) + a dicarboxylate(out). It carries out the reaction prostaglandin E2(out) + a dicarboxylate(in) = prostaglandin E2(in) + a dicarboxylate(out). The enzyme catalyses 3',5'-cyclic AMP(out) + a dicarboxylate(in) = 3',5'-cyclic AMP(in) + a dicarboxylate(out). It catalyses the reaction 3',5'-cyclic GMP(out) + a dicarboxylate(in) = 3',5'-cyclic GMP(in) + a dicarboxylate(out). The catalysed reaction is urate(out) + a dicarboxylate(in) = urate(in) + a dicarboxylate(out). It carries out the reaction kynurenate(out) + glutarate(in) = kynurenate(in) + glutarate(out). The enzyme catalyses (indol-3-yl)acetate(out) + a dicarboxylate(in) = (indol-3-yl)acetate(in) + a dicarboxylate(out). It catalyses the reaction indoxyl sulfate(out) + a dicarboxylate(in) = indoxyl sulfate(in) + a dicarboxylate(out). The catalysed reaction is N-benzoylglycine(out) + a dicarboxylate(in) = N-benzoylglycine(in) + a dicarboxylate(out). It carries out the reaction 3-carboxy-4-methyl-5-propyl-2-furanpropanoate(out) + a dicarboxylate(in) = 3-carboxy-4-methyl-5-propyl-2-furanpropanoate(in) + a dicarboxylate(out). Secondary active transporter that functions as a Na(+)-independent organic anion (OA)/dicarboxylate antiporter where the uptake of one molecule of OA into the cell is coupled with an efflux of one molecule of intracellular dicarboxylate such as 2-oxoglutarate or glutarate. Mediates the uptake of OA across the basolateral side of proximal tubule epithelial cells, thereby contributing to the renal elimination of endogenous OA from the systemic circulation into the urine. Functions as a biopterin transporters involved in the uptake and the secretion of coenzymes tetrahydrobiopterin (BH4), dihydrobiopterin (BH2) and sepiapterin to urine, thereby determining baseline levels of blood biopterins. Transports prostaglandin E2 (PGE2) and prostaglandin F2-alpha (PGF2-alpha) and may contribute to their renal excretion. Involved in the transport of neuroactive tryptophan metabolites kynurenate (KYNA) and xanthurenate (XA). May transport glutamate. Also involved in the disposition of uremic toxins and potentially toxic xenobiotics by the renal organic anion secretory pathway, helping reduce their undesired toxicological effects on the body. Uremic toxins include the indoxyl sulfate (IS), hippurate/N-benzoylglycine (HA), indole acetate (IA) and 3-carboxy-4- methyl-5-propyl-2-furanpropionate(CMPF) and urate. Xenobiotics include the mycotoxin ochratoxin (OTA). May also contribute to the transport of organic compounds in testes across the blood-testis-barrier. The chain is Solute carrier family 22 member 6 from Mus musculus (Mouse).